A 391-amino-acid chain; its full sequence is MDTSLAEEVQQTMATLAPNRFFFMSPYRSFTTSGCFARFDEPAVNGDSPDSPFQQKLAALFADAKAQGIKNPVMVGAIPFDPRQPSSLYIPESWQSFSRQEKQASARRFTRSQSLNVVERQAIPEQTTFEQMVARAAALTATPQVDKVVLSRLIDITTDAAIDSGVLLERLIAQNPVSYNFHVPLADGGVLLGASPELLLRKDGERFSSIPLAGSARRQPDEVLDREAGNRLLASEKDRHEHELVTQAMKEVLRERSSELHVPSSPQLITTPTLWHLATPFEGKANSQENALTLACLLHPTPALSGFPHQAATQVIAELEPFDRELFGGIVGWCDSEGNGEWVVTIRCAKLRENQVRLFAGAGIVPASSPLGEWRETGVKLSTMLNVFGLH.

Positions 140, 142, 145, and 146 each coordinate Mg(2+). Lys147 acts as the Proton acceptor in catalysis. Glu197 acts as the Proton donor in catalysis. Positions 214, 215, 241, 303, 347, and 361 each coordinate isochorismate. Glu241 is a binding site for Mg(2+). Glu376 lines the Mg(2+) pocket. Lys380 contributes to the isochorismate binding site.

Belongs to the isochorismate synthase family. Monomer. Forms a specific pairwise interaction with EntB; this interaction likely facilitates substrate channeling to connect the EntB and EntC active sites. It depends on Mg(2+) as a cofactor.

The catalysed reaction is chorismate = isochorismate. Its pathway is siderophore biosynthesis; enterobactin biosynthesis. Involved in the biosynthesis of the siderophore enterobactin (macrocyclic trimeric lactone of N-(2,3-dihydroxybenzoyl)-serine). Catalyzes the reversible conversion of chorismate to isochorismate. The protein is Isochorismate synthase EntC of Escherichia coli O157:H7.